The sequence spans 195 residues: Imidazoleglycerol-phosphate dehydratase (195 aa).

It belongs to the imidazoleglycerol-phosphate dehydratase family.

The protein resides in the cytoplasm. It catalyses the reaction D-erythro-1-(imidazol-4-yl)glycerol 3-phosphate = 3-(imidazol-4-yl)-2-oxopropyl phosphate + H2O. It functions in the pathway amino-acid biosynthesis; L-histidine biosynthesis; L-histidine from 5-phospho-alpha-D-ribose 1-diphosphate: step 6/9. The chain is Imidazoleglycerol-phosphate dehydratase from Alkaliphilus metalliredigens (strain QYMF).